A 226-amino-acid chain; its full sequence is Small ribosomal subunit protein uS3 (226 aa).

The KH type-2 domain maps to isoleucine 39–lysine 107.

The protein belongs to the universal ribosomal protein uS3 family. As to quaternary structure, part of the 30S ribosomal subunit. Forms a tight complex with proteins S10 and S14.

Functionally, binds the lower part of the 30S subunit head. Binds mRNA in the 70S ribosome, positioning it for translation. The sequence is that of Small ribosomal subunit protein uS3 from Acetivibrio thermocellus (strain ATCC 27405 / DSM 1237 / JCM 9322 / NBRC 103400 / NCIMB 10682 / NRRL B-4536 / VPI 7372) (Clostridium thermocellum).